Here is a 192-residue protein sequence, read N- to C-terminus: dTTP/UTP pyrophosphatase (192 aa).

Residue aspartate 70 is the Proton acceptor of the active site.

It belongs to the Maf family. YhdE subfamily. The cofactor is a divalent metal cation.

Its subcellular location is the cytoplasm. The enzyme catalyses dTTP + H2O = dTMP + diphosphate + H(+). The catalysed reaction is UTP + H2O = UMP + diphosphate + H(+). Functionally, nucleoside triphosphate pyrophosphatase that hydrolyzes dTTP and UTP. May have a dual role in cell division arrest and in preventing the incorporation of modified nucleotides into cellular nucleic acids. In Alkaliphilus metalliredigens (strain QYMF), this protein is dTTP/UTP pyrophosphatase.